We begin with the raw amino-acid sequence, 140 residues long: Putative membrane protein ORF7 (140 aa).

The chain crosses the membrane as a helical span at residues 44 to 60; the sequence is TCAVSFFALFMLIIWVL. Residues 66–118 are disordered; the sequence is PEGSTTRGTDAHTQTEGSTTRGTDAHTQTEGSRDQGSMTPEADDLTRPPLGHG. Over residues 68-103 the composition is skewed to polar residues; that stretch reads GSTTRGTDAHTQTEGSTTRGTDAHTQTEGSRDQGSM.

The protein localises to the membrane. In Ictalurid herpesvirus 1 (strain Auburn) (IcHV-1), this protein is Putative membrane protein ORF7 (ORF7).